A 194-amino-acid chain; its full sequence is Adenylate kinase isoenzyme 1 (194 aa).

M1 is subject to N-acetylmethionine. G18–T23 provides a ligand contact to ATP. The residue at position 38 (S38) is a Phosphoserine. The interval S38–V67 is NMP. AMP contacts are provided by residues T39, R44, Q65–V67, G94–R97, and Q101. Residues K131–D141 are LID. An ATP-binding site is contributed by R132. Positions 138 and 149 each coordinate AMP. ATP is bound at residue G177.

The protein belongs to the adenylate kinase family. AK1 subfamily. As to quaternary structure, monomer. It depends on Mg(2+) as a cofactor.

It is found in the cytoplasm. It carries out the reaction a ribonucleoside 5'-phosphate + ATP = a ribonucleoside 5'-diphosphate + ADP. The catalysed reaction is AMP + ATP = 2 ADP. The enzyme catalyses dAMP + ATP = dADP + ADP. It catalyses the reaction dATP + AMP = dADP + ADP. It carries out the reaction dAMP + dATP = 2 dADP. The catalysed reaction is a 2'-deoxyribonucleoside 5'-diphosphate + ATP = a 2'-deoxyribonucleoside 5'-triphosphate + ADP. The enzyme catalyses a ribonucleoside 5'-diphosphate + ATP = a ribonucleoside 5'-triphosphate + ADP. It catalyses the reaction CDP + GTP = CTP + GDP. It carries out the reaction GDP + ATP = GTP + ADP. The catalysed reaction is UDP + ATP = UTP + ADP. The enzyme catalyses GTP + UDP = UTP + GDP. It catalyses the reaction dTDP + GTP = dTTP + GDP. It carries out the reaction dCDP + GTP = dCTP + GDP. The catalysed reaction is dGDP + ATP = dGTP + ADP. The enzyme catalyses dADP + GTP = dATP + GDP. It catalyses the reaction thiamine diphosphate + ADP = thiamine triphosphate + AMP. Functionally, catalyzes the reversible transfer of the terminal phosphate group between ATP and AMP. Also displays broad nucleoside diphosphate kinase activity. Plays an important role in cellular energy homeostasis and in adenine nucleotide metabolism. Also catalyzes at a very low rate the synthesis of thiamine triphosphate (ThTP) from thiamine diphosphate (ThDP) and ADP. In Homo sapiens (Human), this protein is Adenylate kinase isoenzyme 1.